We begin with the raw amino-acid sequence, 576 residues long: G protein-coupled receptor kinase 6 (576 aa).

The segment at 1–185 (MELENIVANT…LERQPVTKNT (185 aa)) is N-terminal. Positions 53 to 171 (YHSLCERQPI…LDSIYFNRFL (119 aa)) constitute an RGS domain. The region spanning 186 to 448 (FRQYRVLGKG…AREVKEHPLF (263 aa)) is the Protein kinase domain. Residues 192-200 (LGKGGFGEV), lysine 215, and 264-270 (TLMNGGD) contribute to the ATP site. Aspartate 311 functions as the Proton acceptor in the catalytic mechanism. ATP is bound at residue 315–318 (ENIL). An AGC-kinase C-terminal domain is found at 449 to 514 (KKLNFKRLGA…GSVSIPWQNE (66 aa)). A Phosphoserine modification is found at serine 484. Position 485 is a phosphothreonine (threonine 485). S-palmitoyl cysteine attachment occurs at residues cysteine 561, cysteine 562, and cysteine 565. Phosphoserine is present on residues serine 566 and serine 568.

Belongs to the protein kinase superfamily. AGC Ser/Thr protein kinase family. GPRK subfamily. As to quaternary structure, interacts with GIT1. Expressed in the brain in striatal neurons.

The protein resides in the membrane. It carries out the reaction [G-protein-coupled receptor] + ATP = [G-protein-coupled receptor]-phosphate + ADP + H(+). In terms of biological role, specifically phosphorylates the activated forms of G protein-coupled receptors. Such receptor phosphorylation initiates beta-arrestin-mediated receptor desensitization, internalization, and signaling events leading to their desensitization. Seems to be involved in the desensitization of D2-like dopamine receptors in striatum and chemokine receptor CXCR4 which is critical for CXCL12-induced cell chemotaxis. Phosphorylates rhodopsin (RHO) (in vitro) and a non G-protein-coupled receptor, LRP6 during Wnt signaling (in vitro). This Mus musculus (Mouse) protein is G protein-coupled receptor kinase 6 (Grk6).